The sequence spans 340 residues: Guanine nucleotide-binding protein subunit beta-1 (340 aa).

7 WD repeats span residues Gly53–Asp83, Leu95–Ser125, Gly141–Asp170, Gly182–Asp212, Gly224–Asp254, Asn268–Asp298, and Gly310–Asn340.

Belongs to the WD repeat G protein beta family. As to quaternary structure, g proteins are composed of 3 units, alpha, beta and gamma. Interacts with G protein gamma subunits gpc-1 and gpc-2 and with egl-10 and eat-16. Interacts with goa-1 (in GDP-bound form).

Guanine nucleotide-binding proteins (G proteins) are involved as a modulator or transducer in various transmembrane signaling systems. The beta and gamma chains are required for the GTPase activity, for replacement of GDP by GTP, and for G protein-effector interaction. In the early embryo, controls the magnitude of the forces acting on centrosomes but is not required for generating asymmetric forces. The chain is Guanine nucleotide-binding protein subunit beta-1 (gpb-1) from Caenorhabditis briggsae.